Reading from the N-terminus, the 454-residue chain is MDKRIFGIETEFGISYSSPDSRPLAPEEVARYLFRKVVSWGRSSNVFLTNGSRLYLDVGSHPEYATAECDDLAQLIAHDRAGELILDDLVDEAQARLAAEGFNGTVYLFKNNTDSAGNSYGSHENYLIPRRGEFSRLAEILIPFLVTRQLIAGAGKILKTPHGATYAFSQRADHIWEGVSSATTRSRPIINTRDEPHADAEFYRRLHVIVGDSNMSETTALMKVGTVDLVLRMIEAGVIMRDMRMENPIRSIREISHDLSGRALVRLANGRQLTALEIQQEYLTKVTAFVRENGAHNPHVPLILDLWERTLKAIESGDTRSIDTEIDWAIKKKLMDSYRERHGLGLDAPRIAQLDLTYHDISRSRGLYYLLQSRGAVRRLVDDTVIKDAVDAPPQTTRAKLRGDFVRRAQELGRDYTVDWVHLKLNDRAHQTILCKDPFRSVDERVDALLDSMG.

Mg(2+) is bound at residue glutamate 9. Arginine 53 is an ATP binding site. A Mg(2+)-binding site is contributed by tyrosine 55. Aspartate 57 (proton acceptor) is an active-site residue. Glutamate 63 provides a ligand contact to Mg(2+). Positions 66 and 420 each coordinate ATP.

Belongs to the Pup ligase/Pup deamidase family. Pup-conjugating enzyme subfamily.

It carries out the reaction ATP + [prokaryotic ubiquitin-like protein]-L-glutamate + [protein]-L-lysine = ADP + phosphate + N(6)-([prokaryotic ubiquitin-like protein]-gamma-L-glutamyl)-[protein]-L-lysine.. It functions in the pathway protein degradation; proteasomal Pup-dependent pathway. The protein operates within protein modification; protein pupylation. Catalyzes the covalent attachment of the prokaryotic ubiquitin-like protein modifier Pup to the proteasomal substrate proteins, thereby targeting them for proteasomal degradation. This tagging system is termed pupylation. The ligation reaction involves the side-chain carboxylate of the C-terminal glutamate of Pup and the side-chain amino group of a substrate lysine. The sequence is that of Pup--protein ligase from Pseudarthrobacter chlorophenolicus (strain ATCC 700700 / DSM 12829 / CIP 107037 / JCM 12360 / KCTC 9906 / NCIMB 13794 / A6) (Arthrobacter chlorophenolicus).